Here is a 254-residue protein sequence, read N- to C-terminus: N(G),N(G)-dimethylarginine dimethylaminohydrolase (254 aa).

Residues leucine 18, aspartate 60, glutamate 65–aspartate 66, arginine 85, and arginine 132 each bind substrate. Residue histidine 162 is the Proton donor of the active site. Histidine 162 lines the Zn(2+) pocket. Residue isoleucine 243 coordinates substrate. Cysteine 249 contributes to the Zn(2+) binding site. The Nucleophile role is filled by cysteine 249.

This sequence belongs to the DDAH family. As to quaternary structure, homodimer.

It catalyses the reaction N(omega),N(omega)-dimethyl-L-arginine + H2O = dimethylamine + L-citrulline. The enzyme catalyses N(omega)-methyl-L-arginine + H2O = L-citrulline + methylamine. Inhibited by zinc ions. Competitively inhibited by lysine. In terms of biological role, hydrolyzes N(G),N(G)-dimethyl-L-arginine (ADMA) and N(G)-monomethyl-L-arginine (MMA). The protein is N(G),N(G)-dimethylarginine dimethylaminohydrolase of Pseudomonas aeruginosa (strain ATCC 15692 / DSM 22644 / CIP 104116 / JCM 14847 / LMG 12228 / 1C / PRS 101 / PAO1).